The chain runs to 725 residues: Polyribonucleotide nucleotidyltransferase (725 aa).

Residues aspartate 488 and aspartate 494 each coordinate Mg(2+). The 60-residue stretch at 555 to 614 (PRMITMKIHPDKIREVIGKGGSTIQALTKETGTTIDIQEDGTITIASTSTDGMAEAKRRI) folds into the KH domain. The S1 motif domain maps to 624–692 (GKIYAGTVLK…EKGRLRLSLK (69 aa)). The disordered stretch occupies residues 702 to 725 (ISPIAQGDAPAAAPAAPASPDQQQ). Over residues 706–725 (AQGDAPAAAPAAPASPDQQQ) the composition is skewed to low complexity.

This sequence belongs to the polyribonucleotide nucleotidyltransferase family. Requires Mg(2+) as cofactor.

It is found in the cytoplasm. The catalysed reaction is RNA(n+1) + phosphate = RNA(n) + a ribonucleoside 5'-diphosphate. Its function is as follows. Involved in mRNA degradation. Catalyzes the phosphorolysis of single-stranded polyribonucleotides processively in the 3'- to 5'-direction. This Cupriavidus metallidurans (strain ATCC 43123 / DSM 2839 / NBRC 102507 / CH34) (Ralstonia metallidurans) protein is Polyribonucleotide nucleotidyltransferase.